A 468-amino-acid chain; its full sequence is 3-isopropylmalate dehydratase large subunit (468 aa).

3 residues coordinate [4Fe-4S] cluster: cysteine 347, cysteine 407, and cysteine 410.

Belongs to the aconitase/IPM isomerase family. LeuC type 1 subfamily. Heterodimer of LeuC and LeuD. It depends on [4Fe-4S] cluster as a cofactor.

The catalysed reaction is (2R,3S)-3-isopropylmalate = (2S)-2-isopropylmalate. It functions in the pathway amino-acid biosynthesis; L-leucine biosynthesis; L-leucine from 3-methyl-2-oxobutanoate: step 2/4. Catalyzes the isomerization between 2-isopropylmalate and 3-isopropylmalate, via the formation of 2-isopropylmaleate. This is 3-isopropylmalate dehydratase large subunit from Rippkaea orientalis (strain PCC 8801 / RF-1) (Cyanothece sp. (strain PCC 8801)).